The following is a 276-amino-acid chain: Undecaprenyl-diphosphatase (276 aa).

8 consecutive transmembrane segments (helical) span residues 1–21 (MELYQGVVLGVLQGLTEFLPV), 40–60 (ALSFDISVHLGTLFAVALVFF), 93–113 (VRLAALIIVGSIPTAVIGLIL), 120–140 (LFSSLVIVGSMLMVTGTFLWL), 154–174 (IGFGTALFIGVCQGVAVIPGI), 199–219 (FLLSMPAIAGAEILSLKESFA), 227–247 (VTLLSTLTAFIVGTLALVALL), and 255–275 (FYLFAPYCWVVGLISIIAGFV).

The protein belongs to the UppP family.

The protein localises to the cell inner membrane. It carries out the reaction di-trans,octa-cis-undecaprenyl diphosphate + H2O = di-trans,octa-cis-undecaprenyl phosphate + phosphate + H(+). Functionally, catalyzes the dephosphorylation of undecaprenyl diphosphate (UPP). Confers resistance to bacitracin. This chain is Undecaprenyl-diphosphatase, found in Desulforapulum autotrophicum (strain ATCC 43914 / DSM 3382 / VKM B-1955 / HRM2) (Desulfobacterium autotrophicum).